Consider the following 318-residue polypeptide: Homoserine kinase (318 aa).

97–107 (PIGSGLGSSAC) is an ATP binding site.

The protein belongs to the GHMP kinase family. Homoserine kinase subfamily.

The protein localises to the cytoplasm. The catalysed reaction is L-homoserine + ATP = O-phospho-L-homoserine + ADP + H(+). The protein operates within amino-acid biosynthesis; L-threonine biosynthesis; L-threonine from L-aspartate: step 4/5. Catalyzes the ATP-dependent phosphorylation of L-homoserine to L-homoserine phosphate. The protein is Homoserine kinase of Vibrio cholerae serotype O1 (strain M66-2).